Here is a 601-residue protein sequence, read N- to C-terminus: Keratin, type II cytoskeletal 5 (601 aa).

A head region spans residues 1–168; it reads MSRQSTVSFR…DPTIQRVRTE (168 aa). Residues Ser-5, Ser-8, Ser-16, and Ser-21 each carry the phosphoserine modification. Thr-24 is modified (phosphothreonine; by CDK1). A phosphoserine mark is found at Ser-26, Ser-36, Ser-50, Ser-64, Ser-71, and Ser-75. Thr-152 carries the post-translational modification Phosphothreonine; by CDK1. A Phosphothreonine; by AURKB modification is found at Thr-167. The tract at residues 169 to 204 is coil 1A; sequence EREQIKTLNNKFASFIDKVRFLEQQNKVLDTKWALL. The IF rod domain occupies 169 to 482; the sequence is EREQIKTLNN…KLLEGEECRL (314 aa). The segment at 205 to 223 is linker 1; it reads QEQGTKTVRQNLEPLLEQY. The interval 224 to 316 is coil 1B; sequence INNLRRQLDG…FFDAELSQMQ (93 aa). Residues 317–339 are linker 12; the sequence is THVSDTSVVLSMDNNRSLDLDSI. The segment at 340–478 is coil 2; that stretch reads IAEVKAQYED…ATYRKLLEGE (139 aa). Positions 479–601 are tail; it reads ECRLSGEGVG…TSSSRKSFKS (123 aa). Residues 576–601 form a disordered region; sequence FGSGGGSSSSVKFVSTTSSSRKSFKS. Low complexity predominate over residues 583 to 601; sequence SSSVKFVSTTSSSRKSFKS.

It belongs to the intermediate filament family. In terms of assembly, heterodimer of a type I and a type II keratin. Heterodimer with type I keratin KRT25 leading to the formation of keratin intermediate filament (KIF) network. Forms a heterodimer (via 2B domains) with KRT14 (via 2B domains). Interacts with TCHP. Interacts with EPPK1. Interacts with AMELX. Interacts with PKP1 (via N-terminus) and PKP2. Post-translationally, phosphorylated by CDK1, AURKB and Rho-kinase, phosphorylation is regulated by the cell cycle. Thr-24 phosphorylation, mediated by CDK1, peaks during prometaphase or metaphase cells with phosphorylated filamentous structures evident throughout the cytoplasm early mitosis. CDK1 phosphorylates Thr-24 in mitotic cells at the site of injury. O-glycosylated.

The protein localises to the cytoplasm. Its function is as follows. Required for the formation of keratin intermediate filaments in the basal epidermis and maintenance of the skin barrier in response to mechanical stress. Regulates the recruitment of Langerhans cells to the epidermis, potentially by modulation of the abundance of macrophage chemotactic cytokines, macrophage inflammatory cytokines and CTNND1 localization in keratinocytes. The polypeptide is Keratin, type II cytoskeletal 5 (Bos taurus (Bovine)).